The chain runs to 71 residues: Keratin-associated protein 6-1 (71 aa).

Belongs to the KRTAP type 6 family. Interacts with hair keratins.

Its function is as follows. In the hair cortex, hair keratin intermediate filaments are embedded in an interfilamentous matrix, consisting of hair keratin-associated proteins (KRTAP), which are essential for the formation of a rigid and resistant hair shaft through their extensive disulfide bond cross-linking with abundant cysteine residues of hair keratins. The matrix proteins include the high-sulfur and high-glycine-tyrosine keratins. This is Keratin-associated protein 6-1 (KRTAP6-1) from Homo sapiens (Human).